A 90-amino-acid polypeptide reads, in one-letter code: Small ribosomal subunit protein uS15 (90 aa).

Belongs to the universal ribosomal protein uS15 family. As to quaternary structure, part of the 30S ribosomal subunit. Forms a bridge to the 50S subunit in the 70S ribosome, contacting the 23S rRNA.

One of the primary rRNA binding proteins, it binds directly to 16S rRNA where it helps nucleate assembly of the platform of the 30S subunit by binding and bridging several RNA helices of the 16S rRNA. In terms of biological role, forms an intersubunit bridge (bridge B4) with the 23S rRNA of the 50S subunit in the ribosome. The polypeptide is Small ribosomal subunit protein uS15 (Helicobacter pylori (strain J99 / ATCC 700824) (Campylobacter pylori J99)).